The following is a 235-amino-acid chain: uncharacterized protein (235 aa).

A helical membrane pass occupies residues 27–47 (AMKLWSTWITLLILTFFCSEC). The CX domain occupies 124–185 (YFWGESKYVP…CCGYDCCSNS (62 aa)). A helical transmembrane segment spans residues 187–207 (IFTSIFSLLVILLIVSVLSIF).

The protein resides in the membrane. This is an uncharacterized protein from Caenorhabditis elegans.